A 346-amino-acid chain; its full sequence is fMet-Leu-Phe receptor (346 aa).

2 N-linked (GlcNAc...) asparagine glycosylation sites follow: Asn1 and Asn7. Over 1-24 (NSSLPTNISGGTPAVSAGYLFLDI) the chain is Extracellular. A helical transmembrane segment spans residues 25 to 47 (ITYLVFAVTFVLGVLGNGLVIWV). Topologically, residues 48-58 (AGFRMRHTVTT) are cytoplasmic. The helical transmembrane segment at 59 to 80 (ISYLNLAVADFCFTSTLPFLMV) threads the bilayer. Topologically, residues 81-97 (VKVMRGHWPFGWFLCKF) are extracellular. Cys95 and Cys173 are joined by a disulfide. Residues 98-118 (IFTIVDINLFGSVFLIALIAL) traverse the membrane as a helical segment. Residues 119–137 (DRCVCVLHPVWTQNHRTVS) are Cytoplasmic-facing. A helical membrane pass occupies residues 138–159 (LAKKVIIGPWVMALLLTLPVII). Residues 160–202 (RVTTVPGKTGTVACTFDFSPWTNDPVEKLKVTIAMLTVRGIIR) are Extracellular-facing. A helical membrane pass occupies residues 203–223 (FIIGFSVPMSIVAVSYGLIAT). Topologically, residues 224–239 (KIHKQGLIKSSRPLRV) are cytoplasmic. A helical membrane pass occupies residues 240–263 (LSFVVAAFFLCWSPYQVVAFIATV). Residues 264–282 (RLRNILQGLSKELRIAVDA) are Extracellular-facing. The helical transmembrane segment at 283–302 (TSALAFFNSCLNPMLYVFMG) threads the bilayer. Over 303-346 (QDFRERLIHSLPTSLERALTEDSAQTSDTATNSTLPSAEVPLQA) the chain is Cytoplasmic. A disordered region spans residues 321–346 (LTEDSAQTSDTATNSTLPSAEVPLQA). Positions 324–338 (DSAQTSDTATNSTLP) are enriched in polar residues.

This sequence belongs to the G-protein coupled receptor 1 family. Post-translationally, phosphorylated; which is necessary for desensitization.

It is found in the cell membrane. In terms of biological role, high affinity receptor for N-formyl-methionyl peptides (fMLP), which are powerful neutrophil chemotactic factors. Binding of fMLP to the receptor stimulates intracellular calcium mobilization and superoxide anion release. This response is mediated via a G-protein that activates a phosphatidylinositol-calcium second messenger system. Receptor for TAFA4, mediates its effects on chemoattracting macrophages, promoting phagocytosis and increasing ROS release. Receptor for cathepsin CTSG, leading to increased phagocyte chemotaxis. In Macaca mulatta (Rhesus macaque), this protein is fMet-Leu-Phe receptor (FPR1).